Reading from the N-terminus, the 233-residue chain is Small ribosomal subunit protein uS2c (233 aa).

It belongs to the universal ribosomal protein uS2 family.

It is found in the plastid. The protein localises to the chloroplast. In Galdieria sulphuraria (Red alga), this protein is Small ribosomal subunit protein uS2c (rps2).